A 428-amino-acid chain; its full sequence is Dihydroorotase (428 aa).

Zn(2+)-binding residues include His-59 and His-61. Substrate is bound by residues 61-63 (HLR) and Asn-93. 3 residues coordinate Zn(2+): Asp-151, His-178, and His-231. Residue Asn-277 participates in substrate binding. Asp-304 lines the Zn(2+) pocket. Residue Asp-304 is part of the active site. Residues His-308 and 322 to 323 (FG) each bind substrate.

This sequence belongs to the metallo-dependent hydrolases superfamily. DHOase family. Class I DHOase subfamily. It depends on Zn(2+) as a cofactor.

The enzyme catalyses (S)-dihydroorotate + H2O = N-carbamoyl-L-aspartate + H(+). It functions in the pathway pyrimidine metabolism; UMP biosynthesis via de novo pathway; (S)-dihydroorotate from bicarbonate: step 3/3. In terms of biological role, catalyzes the reversible cyclization of carbamoyl aspartate to dihydroorotate. This chain is Dihydroorotase, found in Bacillus cereus (strain ZK / E33L).